A 398-amino-acid chain; its full sequence is 1-deoxy-D-xylulose 5-phosphate reductoisomerase (398 aa).

The NADPH site is built by Thr-10, Gly-11, Ser-12, Ile-13, Gly-36, Asn-38, and Asn-124. 1-deoxy-D-xylulose 5-phosphate is bound at residue Lys-125. Residue Glu-126 coordinates NADPH. Asp-150 is a binding site for Mn(2+). Positions 151, 152, 186, and 209 each coordinate 1-deoxy-D-xylulose 5-phosphate. Glu-152 contacts Mn(2+). Gly-215 contributes to the NADPH binding site. 1-deoxy-D-xylulose 5-phosphate contacts are provided by Ser-222, Asn-227, Lys-228, and Glu-231. Position 231 (Glu-231) interacts with Mn(2+).

It belongs to the DXR family. In terms of assembly, homodimer. It depends on Mg(2+) as a cofactor. Mn(2+) is required as a cofactor.

It carries out the reaction 2-C-methyl-D-erythritol 4-phosphate + NADP(+) = 1-deoxy-D-xylulose 5-phosphate + NADPH + H(+). Its pathway is isoprenoid biosynthesis; isopentenyl diphosphate biosynthesis via DXP pathway; isopentenyl diphosphate from 1-deoxy-D-xylulose 5-phosphate: step 1/6. Functionally, catalyzes the NADPH-dependent rearrangement and reduction of 1-deoxy-D-xylulose-5-phosphate (DXP) to 2-C-methyl-D-erythritol 4-phosphate (MEP). This Pectobacterium atrosepticum (strain SCRI 1043 / ATCC BAA-672) (Erwinia carotovora subsp. atroseptica) protein is 1-deoxy-D-xylulose 5-phosphate reductoisomerase.